The chain runs to 469 residues: UDP-N-acetylmuramate--L-alanine ligase (469 aa).

ATP is bound at residue 112-118; sequence GTHGKTT.

Belongs to the MurCDEF family.

The protein resides in the cytoplasm. The catalysed reaction is UDP-N-acetyl-alpha-D-muramate + L-alanine + ATP = UDP-N-acetyl-alpha-D-muramoyl-L-alanine + ADP + phosphate + H(+). Its pathway is cell wall biogenesis; peptidoglycan biosynthesis. Its function is as follows. Cell wall formation. This chain is UDP-N-acetylmuramate--L-alanine ligase, found in Laribacter hongkongensis (strain HLHK9).